The chain runs to 216 residues: GTP cyclohydrolase-2 (216 aa).

Position 50-54 (50-54 (RIHSE)) interacts with GTP. Residues C55, C66, and C68 each coordinate Zn(2+). Residues Q71, 93–95 (EGR), and T115 contribute to the GTP site. D127 (proton acceptor) is an active-site residue. Residue R129 is the Nucleophile of the active site. Positions 150 and 155 each coordinate GTP.

This sequence belongs to the GTP cyclohydrolase II family. Zn(2+) is required as a cofactor.

It carries out the reaction GTP + 4 H2O = 2,5-diamino-6-hydroxy-4-(5-phosphoribosylamino)-pyrimidine + formate + 2 phosphate + 3 H(+). It participates in cofactor biosynthesis; riboflavin biosynthesis; 5-amino-6-(D-ribitylamino)uracil from GTP: step 1/4. Catalyzes the conversion of GTP to 2,5-diamino-6-ribosylamino-4(3H)-pyrimidinone 5'-phosphate (DARP), formate and pyrophosphate. This Histophilus somni (strain 129Pt) (Haemophilus somnus) protein is GTP cyclohydrolase-2.